Reading from the N-terminus, the 812-residue chain is Leucine-rich repeat-containing protein 41 (812 aa).

The interval 45-54 (ALFELCGRAV) is interaction with Elongin BC complex. Serine 155, serine 276, and serine 326 each carry phosphoserine. Residues 267–408 (GEASRGRAPS…GARTRQGPGA (142 aa)) form a disordered region. Residue threonine 327 is modified to Phosphothreonine. Residues 354–381 (TKRSPSAPAATSSASSSTSSYKRAPASS) are compositionally biased toward low complexity. Phosphoserine is present on residues serine 357 and serine 373. Basic residues predominate over residues 387 to 401 (PLKRFKRAAGKKGAR). LRR repeat units lie at residues 487-507 (WVSL…IFRL), 518-530 (AGCR…LSDL), 531-555 (FSPL…VLSI), 613-635 (SGSL…FGLV), 636-659 (LQTL…LADC), 701-728 (NSTL…VFSE), and 731-752 (SSSL…LLEF).

In terms of assembly, part of an E3 ubiquitin-protein ligase complex with Elongin BC (ELOB and ELOC), RBX1 and CUL5. Component of a probable ECS(LRRC41) complex which contains CUL5, RNF7/RBX2, Elongin BC and LRRC41. Interacts with CUL5, RNF7, ELOB and ELOC.

It functions in the pathway protein modification; protein ubiquitination. Functionally, probable substrate recognition component of an ECS (Elongin BC-CUL2/5-SOCS-box protein) E3 ubiquitin ligase complex which mediates the ubiquitination and subsequent proteasomal degradation of target proteins. The polypeptide is Leucine-rich repeat-containing protein 41 (LRRC41) (Homo sapiens (Human)).